Reading from the N-terminus, the 313-residue chain is MTPRAIICLAGPTAAGKSASTLALAQRWPLEIINVDSATIYRGMDIGTAKPSAAERAQVPQHLLDIRDPAQSYSAAEFRADALRLIAEIHARGRIPLLAGGTMLYYKALREGLDDLPQADPALRAELEARAARLGWPALHAELALLDPATAARLSPNDSQRIQRALEICRLAGQPMSALLQGERRGDAPSPYRYVTLSLEPSERAALHARIAQRFDAMLAAGLVEEVRGLHARPDLHPGLPSVRCVGYRQMWSYLDGDIDLDTAREQGVAATRQLAKRQLTWLRAQPERVIIDCLAGDAVARTVDAMARALPD.

11-18 (GPTAAGKS) is an ATP binding site. Position 13-18 (13-18 (TAAGKS)) interacts with substrate. Interaction with substrate tRNA stretches follow at residues 36-39 (DSAT), 160-164 (QRIQR), and 244-249 (RCVGYR).

Belongs to the IPP transferase family. As to quaternary structure, monomer. The cofactor is Mg(2+).

The catalysed reaction is adenosine(37) in tRNA + dimethylallyl diphosphate = N(6)-dimethylallyladenosine(37) in tRNA + diphosphate. Catalyzes the transfer of a dimethylallyl group onto the adenine at position 37 in tRNAs that read codons beginning with uridine, leading to the formation of N6-(dimethylallyl)adenosine (i(6)A). The sequence is that of tRNA dimethylallyltransferase from Bordetella pertussis (strain Tohama I / ATCC BAA-589 / NCTC 13251).